We begin with the raw amino-acid sequence, 114 residues long: KKLGKKGLTPSKIGIILRDSHGVAQVRFVNGNKILRIMKSVGLKPDIPEDLYHMIKKAVAIRKHLERNRKDKDGKFRLILVESRIHRLARYYKTKSVLPPNWKYESSTASALVA.

This sequence belongs to the universal ribosomal protein uS15 family.

This chain is Small ribosomal subunit protein uS15 (RpS13), found in Musca domestica (House fly).